We begin with the raw amino-acid sequence, 484 residues long: tRNA sulfurtransferase (484 aa).

The region spanning 61 to 165 is the THUMP domain; sequence TLLVELLGRI…NDKMMLIKAR (105 aa). ATP is bound by residues 183–184, lysine 265, glycine 287, and glutamine 296; that span reads LI. A disulfide bridge connects residues cysteine 344 and cysteine 456. One can recognise a Rhodanese domain in the interval 404 to 484; it reads LSANEVILDI…DNVKVLNKIS (81 aa). Catalysis depends on cysteine 456, which acts as the Cysteine persulfide intermediate.

This sequence belongs to the ThiI family.

Its subcellular location is the cytoplasm. It carries out the reaction [ThiI sulfur-carrier protein]-S-sulfanyl-L-cysteine + a uridine in tRNA + 2 reduced [2Fe-2S]-[ferredoxin] + ATP + H(+) = [ThiI sulfur-carrier protein]-L-cysteine + a 4-thiouridine in tRNA + 2 oxidized [2Fe-2S]-[ferredoxin] + AMP + diphosphate. It catalyses the reaction [ThiS sulfur-carrier protein]-C-terminal Gly-Gly-AMP + S-sulfanyl-L-cysteinyl-[cysteine desulfurase] + AH2 = [ThiS sulfur-carrier protein]-C-terminal-Gly-aminoethanethioate + L-cysteinyl-[cysteine desulfurase] + A + AMP + 2 H(+). Its pathway is cofactor biosynthesis; thiamine diphosphate biosynthesis. In terms of biological role, catalyzes the ATP-dependent transfer of a sulfur to tRNA to produce 4-thiouridine in position 8 of tRNAs, which functions as a near-UV photosensor. Also catalyzes the transfer of sulfur to the sulfur carrier protein ThiS, forming ThiS-thiocarboxylate. This is a step in the synthesis of thiazole, in the thiamine biosynthesis pathway. The sulfur is donated as persulfide by IscS. The sequence is that of tRNA sulfurtransferase from Histophilus somni (strain 2336) (Haemophilus somnus).